Reading from the N-terminus, the 105-residue chain is Nucleoid-associated protein ABC0038 (105 aa).

The span at 1-22 (MEMKNMGNMMKQMQKMQKQMMK) shows a compositional bias: low complexity. The disordered stretch occupies residues 1–26 (MEMKNMGNMMKQMQKMQKQMMKAQEE).

The protein belongs to the YbaB/EbfC family. As to quaternary structure, homodimer.

The protein localises to the cytoplasm. It is found in the nucleoid. Binds to DNA and alters its conformation. May be involved in regulation of gene expression, nucleoid organization and DNA protection. This Shouchella clausii (strain KSM-K16) (Alkalihalobacillus clausii) protein is Nucleoid-associated protein ABC0038.